A 158-amino-acid polypeptide reads, in one-letter code: SsrA-binding protein (158 aa).

Residues 133 to 158 form a disordered region; it reads KIHDKRETEAKRDWNRQKQRLLKDNA. Over residues 136–158 the composition is skewed to basic and acidic residues; that stretch reads DKRETEAKRDWNRQKQRLLKDNA.

This sequence belongs to the SmpB family.

Its subcellular location is the cytoplasm. Functionally, required for rescue of stalled ribosomes mediated by trans-translation. Binds to transfer-messenger RNA (tmRNA), required for stable association of tmRNA with ribosomes. tmRNA and SmpB together mimic tRNA shape, replacing the anticodon stem-loop with SmpB. tmRNA is encoded by the ssrA gene; the 2 termini fold to resemble tRNA(Ala) and it encodes a 'tag peptide', a short internal open reading frame. During trans-translation Ala-aminoacylated tmRNA acts like a tRNA, entering the A-site of stalled ribosomes, displacing the stalled mRNA. The ribosome then switches to translate the ORF on the tmRNA; the nascent peptide is terminated with the 'tag peptide' encoded by the tmRNA and targeted for degradation. The ribosome is freed to recommence translation, which seems to be the essential function of trans-translation. This Ruegeria pomeroyi (strain ATCC 700808 / DSM 15171 / DSS-3) (Silicibacter pomeroyi) protein is SsrA-binding protein.